The chain runs to 129 residues: Translation initiation factor 5A (129 aa).

The residue at position 36 (lysine 36) is a Hypusine.

It belongs to the eIF-5A family.

It localises to the cytoplasm. Functionally, functions by promoting the formation of the first peptide bond. This Methanobrevibacter smithii (strain ATCC 35061 / DSM 861 / OCM 144 / PS) protein is Translation initiation factor 5A (eIF5A).